The chain runs to 312 residues: Homoserine O-acetyltransferase (312 aa).

The active-site Acyl-thioester intermediate is the Cys142. Lys163 and Ser192 together coordinate substrate. His235 (proton acceptor) is an active-site residue. The active site involves Glu237. Arg249 is a substrate binding site.

Belongs to the MetA family.

It is found in the cytoplasm. It carries out the reaction L-homoserine + acetyl-CoA = O-acetyl-L-homoserine + CoA. Its pathway is amino-acid biosynthesis; L-methionine biosynthesis via de novo pathway; O-acetyl-L-homoserine from L-homoserine: step 1/1. In terms of biological role, transfers an acetyl group from acetyl-CoA to L-homoserine, forming acetyl-L-homoserine. This is Homoserine O-acetyltransferase from Chelativorans sp. (strain BNC1).